We begin with the raw amino-acid sequence, 859 residues long: Cleavage factor two protein 2 (859 aa).

The disordered stretch occupies residues 560 to 611; that stretch reads PDDSDNVNQNSRKRPLKDGAKTTSPVNEEDNKNEEEDGYNMSDPISKRSKHR. Residues 586-597 show a composition bias toward acidic residues; sequence NEEDNKNEEEDG.

In terms of assembly, component of the cleavage and polyadenylation factor (CPF) complex, which is composed of at least PTI1, SYC1, SSU72, GLC7, MPE1, REF2, PFS2, PTA1, YSH1/BRR5, SWD2, CFT2/YDH1, YTH1, CFT1/YHH1, FIP1 and PAP1. Interacts with the CTD domain of RPB1/RNA polymerase II; the interaction is enhanced upon phosphorylation of the RPB1 CTD domain. Interacts with PCF11.

It is found in the nucleus. Functionally, RNA-binding component of the cleavage and polyadenylation factor (CPF) complex, which plays a key role in polyadenylation-dependent pre-mRNA 3'-end formation and cooperates with cleavage factors including the CFIA complex and NAB4/CFIB. May be involved in poly(A)-site recognition. May be involved in the association of the CPF, CPFIA and RNA polymerase II complexes. The sequence is that of Cleavage factor two protein 2 (CFT2) from Saccharomyces cerevisiae (strain ATCC 204508 / S288c) (Baker's yeast).